Consider the following 189-residue polypeptide: uncharacterized protein (189 aa).

5 helical membrane passes run 4 to 21 (AIST…FLFR), 34 to 56 (AFYP…PLIL), 79 to 101 (LLVI…LIYS), 122 to 144 (RILS…VLLN), and 148 to 170 (ILHV…NLLV).

The protein resides in the cell membrane. This is an uncharacterized protein from Archaeoglobus fulgidus (strain ATCC 49558 / DSM 4304 / JCM 9628 / NBRC 100126 / VC-16).